Consider the following 312-residue polypeptide: Dihydroorotate dehydrogenase B (NAD(+)), catalytic subunit (312 aa).

FMN contacts are provided by residues S21 and 45–46; that span reads KA. Residues K45 and 69-73 contribute to the substrate site; that span reads NAIGL. FMN-binding residues include N99 and N127. A substrate-binding site is contributed by N127. Catalysis depends on C130, which acts as the Nucleophile. Residues K165 and I191 each contribute to the FMN site. 192–193 lines the substrate pocket; the sequence is NT. FMN is bound by residues G217, 243 to 244, and 265 to 266; these read GG and GT.

Belongs to the dihydroorotate dehydrogenase family. Type 1 subfamily. In terms of assembly, heterotetramer of 2 PyrK and 2 PyrD type B subunits. It depends on FMN as a cofactor.

Its subcellular location is the cytoplasm. The catalysed reaction is (S)-dihydroorotate + NAD(+) = orotate + NADH + H(+). Its pathway is pyrimidine metabolism; UMP biosynthesis via de novo pathway; orotate from (S)-dihydroorotate (NAD(+) route): step 1/1. In terms of biological role, catalyzes the conversion of dihydroorotate to orotate with NAD(+) as electron acceptor. The protein is Dihydroorotate dehydrogenase B (NAD(+)), catalytic subunit (pyrD) of Anoxybacillus flavithermus (strain DSM 21510 / WK1).